The primary structure comprises 202 residues: Na(+)-translocating NADH-quinone reductase subunit E (202 aa).

6 helical membrane passes run 11-31, 39-59, 81-101, 114-134, 144-164, and 180-200; these read AVFIENLALSFFLGMCTFLAV, FGLGVAVIVVLGISVPVNNLI, FLKFLTFIGVIAAIVQILEMA, GIFLPLITVNCAIFGGVAFMV, VVFGIGSGVGWALAIVALAAV, and LGITFISVGLIGLGFMSFSGV.

The protein belongs to the NqrDE/RnfAE family. In terms of assembly, composed of six subunits; NqrA, NqrB, NqrC, NqrD, NqrE and NqrF.

The protein resides in the cell inner membrane. The catalysed reaction is a ubiquinone + n Na(+)(in) + NADH + H(+) = a ubiquinol + n Na(+)(out) + NAD(+). NQR complex catalyzes the reduction of ubiquinone-1 to ubiquinol by two successive reactions, coupled with the transport of Na(+) ions from the cytoplasm to the periplasm. NqrA to NqrE are probably involved in the second step, the conversion of ubisemiquinone to ubiquinol. In Idiomarina loihiensis (strain ATCC BAA-735 / DSM 15497 / L2-TR), this protein is Na(+)-translocating NADH-quinone reductase subunit E.